The primary structure comprises 271 residues: 3-methyl-2-oxobutanoate hydroxymethyltransferase 1 (271 aa).

The Mg(2+) site is built by Asp-53 and Asp-92. 3-methyl-2-oxobutanoate is bound by residues 53–54, Asp-92, and Lys-120; that span reads DS. Residue Glu-122 participates in Mg(2+) binding. Glu-189 acts as the Proton acceptor in catalysis.

It belongs to the PanB family. As to quaternary structure, homodecamer; pentamer of dimers. It depends on Mg(2+) as a cofactor.

The protein localises to the cytoplasm. It catalyses the reaction 3-methyl-2-oxobutanoate + (6R)-5,10-methylene-5,6,7,8-tetrahydrofolate + H2O = 2-dehydropantoate + (6S)-5,6,7,8-tetrahydrofolate. It participates in cofactor biosynthesis; (R)-pantothenate biosynthesis; (R)-pantoate from 3-methyl-2-oxobutanoate: step 1/2. Functionally, catalyzes the reversible reaction in which hydroxymethyl group from 5,10-methylenetetrahydrofolate is transferred onto alpha-ketoisovalerate to form ketopantoate. This is 3-methyl-2-oxobutanoate hydroxymethyltransferase 1 from Burkholderia cenocepacia (strain HI2424).